Consider the following 856-residue polypeptide: Structure-specific endonuclease subunit SLX4 (856 aa).

A compositionally biased stretch (polar residues) spans 1–19 (MDNAAIASQSNTPPSNGRS). 9 disordered regions span residues 1 to 24 (MDNA…ARFV), 39 to 61 (IEPS…SKSP), 88 to 121 (VDSP…HKMA), 139 to 201 (KTRK…TDNE), 296 to 326 (GIQT…KKPQ), 362 to 392 (KKMG…GNGP), 621 to 640 (SKSS…SQGD), 653 to 688 (RSDS…SNEG), and 715 to 742 (DSVG…QDCD). Residues 51–60 (STLLTSLSKS) show a composition bias toward low complexity. The segment covering 139 to 152 (KTRKKKAATAKRTR) has biased composition (basic residues). Residues 296–309 (GIQTPTESRPATND) are compositionally biased toward polar residues. A compositionally biased stretch (polar residues) spans 673–686 (SVKSQESKSFSLSN).

The protein belongs to the SLX4 family. Forms a heterodimer with SLX1. Post-translationally, phosphorylated in response to DNA damage.

It localises to the nucleus. In terms of biological role, regulatory subunit of the SLX1-SLX4 structure-specific endonuclease that resolves DNA secondary structures generated during DNA repair and recombination. Has endonuclease activity towards branched DNA substrates, introducing single-strand cuts in duplex DNA close to junctions with ss-DNA. The chain is Structure-specific endonuclease subunit SLX4 from Ajellomyces dermatitidis (strain ER-3 / ATCC MYA-2586) (Blastomyces dermatitidis).